The chain runs to 1110 residues: Coiled-coil domain-containing protein 150 (1110 aa).

Coiled coils occupy residues 122–250 (LENL…TSAS), 288–313 (QDLLAQEQRKNEDLGMTISQLKSDLN), 413–695 (AAHA…KEDN), and 728–1048 (SEIA…EAHR).

This Mus musculus (Mouse) protein is Coiled-coil domain-containing protein 150 (Ccdc150).